A 233-amino-acid chain; its full sequence is 1-(5-phosphoribosyl)-5-[(5-phosphoribosylamino)methylideneamino] imidazole-4-carboxamide isomerase (233 aa).

The active-site Proton acceptor is aspartate 8. The Proton donor role is filled by aspartate 125.

The protein belongs to the HisA/HisF family.

It localises to the cytoplasm. It carries out the reaction 1-(5-phospho-beta-D-ribosyl)-5-[(5-phospho-beta-D-ribosylamino)methylideneamino]imidazole-4-carboxamide = 5-[(5-phospho-1-deoxy-D-ribulos-1-ylimino)methylamino]-1-(5-phospho-beta-D-ribosyl)imidazole-4-carboxamide. It participates in amino-acid biosynthesis; L-histidine biosynthesis; L-histidine from 5-phospho-alpha-D-ribose 1-diphosphate: step 4/9. The chain is 1-(5-phosphoribosyl)-5-[(5-phosphoribosylamino)methylideneamino] imidazole-4-carboxamide isomerase from Thermococcus kodakarensis (strain ATCC BAA-918 / JCM 12380 / KOD1) (Pyrococcus kodakaraensis (strain KOD1)).